The sequence spans 237 residues: Photosystem I-associated linker protein CpcL (237 aa).

The PBS-linker domain occupies 11–191 (TTQNQRVQSF…DYRDRAGIVR (181 aa)). A helical membrane pass occupies residues 208–228 (GVAILGVLLAISAGMTFLFVL).

The protein belongs to the phycobilisome linker protein family. In terms of assembly, part of a specialized phycobilisome (PBS), a structure that is usually composed of two distinct substructures: a core complex and a number of rods radiating from the core. This protein is part of a core-less PBS rod (called CpcL-PBS). In vegetative cells associated substoichiometrically with photosystem I and phycobiliproteins phycocyanin as well as phycoerythrocyanin in the thylakoid membrane, not found in conventional, hemidiscoidal phycobilisomes.

The protein resides in the cellular thylakoid membrane. Functionally, rod linker protein, associated with phycocyanin (PC). Linker polypeptides determine the state of aggregation and the location of the disk-shaped phycobiliprotein units within the phycobilisome (PBS) and modulate their spectroscopic properties in order to mediate a directed and optimal energy transfer. Forms a supercomplex with tetrameric photosystem I (PSI) and PC that allows efficient energy transfer from PC to PSI. This protein seems to be in the middle of the PC hexameric rod and may anchor the PC rods at the periphery of PSI tetramers. May be involved in the cyclic electron transport around PSI that provides ATP needed for N(2) fixation in heterocysts. The polypeptide is Photosystem I-associated linker protein CpcL (Nostoc sp. (strain PCC 7120 / SAG 25.82 / UTEX 2576)).